The following is a 330-amino-acid chain: Ferrochelatase (330 aa).

2 residues coordinate Fe cation: histidine 200 and glutamate 281.

Belongs to the ferrochelatase family.

It localises to the cytoplasm. It carries out the reaction heme b + 2 H(+) = protoporphyrin IX + Fe(2+). The protein operates within porphyrin-containing compound metabolism; protoheme biosynthesis; protoheme from protoporphyrin-IX: step 1/1. In terms of biological role, catalyzes the ferrous insertion into protoporphyrin IX. The polypeptide is Ferrochelatase (Marinomonas sp. (strain MWYL1)).